A 325-amino-acid chain; its full sequence is NADH-quinone oxidoreductase subunit H (325 aa).

Transmembrane regions (helical) follow at residues 11–31 (ILISVLKAVVILLVVVTCGAF), 81–101 (AIFTLAPVIAFTSLLLSFAIV), 114–134 (IGILFFLMMAGLAVYAVLFAG), 154–174 (LSYEVFLGLSLMGVVAQAGSF), 186–206 (VWNVIPQFFGFVTFAIAGVAV), 237–257 (FFVGEYIGIVTVSALIVTLFF), 265–285 (LPPFIWFALKTAFFMVMFILI), and 304–324 (VCLPLTLLNLLATAAVILYNA).

It belongs to the complex I subunit 1 family. As to quaternary structure, NDH-1 is composed of 13 different subunits. Subunits NuoA, H, J, K, L, M, N constitute the membrane sector of the complex.

The protein localises to the cell inner membrane. It catalyses the reaction a quinone + NADH + 5 H(+)(in) = a quinol + NAD(+) + 4 H(+)(out). In terms of biological role, NDH-1 shuttles electrons from NADH, via FMN and iron-sulfur (Fe-S) centers, to quinones in the respiratory chain. The immediate electron acceptor for the enzyme in this species is believed to be ubiquinone. Couples the redox reaction to proton translocation (for every two electrons transferred, four hydrogen ions are translocated across the cytoplasmic membrane), and thus conserves the redox energy in a proton gradient. This subunit may bind ubiquinone. The chain is NADH-quinone oxidoreductase subunit H from Yersinia enterocolitica serotype O:8 / biotype 1B (strain NCTC 13174 / 8081).